Reading from the N-terminus, the 364-residue chain is G-protein coupled receptor 4 (364 aa).

Residues Met-1 to Ser-8 are Extracellular-facing. The N-linked (GlcNAc...) asparagine glycan is linked to Asn-3. A helical membrane pass occupies residues Cys-9–Gln-45. Intrachain disulfides connect Cys-9-Cys-258 and Cys-90-Cys-168. Topologically, residues Val-46 to Lys-49 are cytoplasmic. A helical transmembrane segment spans residues Asn-50–Gln-80. At Asp-81 to His-85 the chain is on the extracellular side. The chain crosses the membrane as a helical span at residues Gly-86–His-121. Residues Pro-122–Arg-129 are Cytoplasmic-facing. The helical transmembrane segment at Arg-130–Asn-156 threads the bilayer. Residues Glu-157–Tyr-172 lie on the Extracellular side of the membrane. Positions Glu-157–Tyr-172 are extracellular loop 2 (ECL2). Asn-164 carries N-linked (GlcNAc...) asparagine glycosylation. Residues Pro-173 to Thr-210 traverse the membrane as a helical segment. The Cytoplasmic portion of the chain corresponds to Asn-211–Thr-214. A helical transmembrane segment spans residues Glu-215–Val-250. Over Tyr-251 to Phe-260 the chain is Extracellular. Residues Glu-261 to Ala-289 form a helical membrane-spanning segment. The Cytoplasmic segment spans residues Asn-290–Cys-364.

The protein belongs to the G-protein coupled receptor 1 family.

Its subcellular location is the cell membrane. Activated by a network of residues that connects an extracellular-facing cavity to Glu-145, a conserved charged residue buried in the transmembrane core of the receptor. Protonation likely drives conformational changes in extracellular loop 2 (ECL2), which stabilizes movement of transmembrane 3 (TM3) and a series of rearrangements that connect the extracellular-facing cavity to Glu-145, a residue only conserved in proton-sensing G-protein coupled receptors. Functionally, proton-sensing G-protein coupled receptor activated by extracellular pH, which is required to monitor pH changes and generate adaptive reactions. Ligand binding causes a conformation change that triggers signaling via guanine nucleotide-binding proteins (G proteins) and modulates the activity of downstream effectors, such as adenylate cyclase. The sequence is that of G-protein coupled receptor 4 from Callorhinchus milii (Ghost shark).